The chain runs to 251 residues: Triosephosphate isomerase (251 aa).

9–11 (NWK) provides a ligand contact to substrate. Catalysis depends on histidine 95, which acts as the Electrophile. The Proton acceptor role is filled by glutamate 167. Residues glycine 173, serine 213, and 234–235 (GG) each bind substrate. Phosphoserine is present on serine 213.

It belongs to the triosephosphate isomerase family. Homodimer.

Its subcellular location is the cytoplasm. The catalysed reaction is D-glyceraldehyde 3-phosphate = dihydroxyacetone phosphate. It participates in carbohydrate biosynthesis; gluconeogenesis. The protein operates within carbohydrate degradation; glycolysis; D-glyceraldehyde 3-phosphate from glycerone phosphate: step 1/1. Functionally, involved in the gluconeogenesis. Catalyzes stereospecifically the conversion of dihydroxyacetone phosphate (DHAP) to D-glyceraldehyde-3-phosphate (G3P). This chain is Triosephosphate isomerase, found in Priestia megaterium (strain DSM 319 / IMG 1521) (Bacillus megaterium).